The primary structure comprises 192 residues: Ion-translocating oxidoreductase complex subunit B (192 aa).

Positions 1–26 (MNAIWIAVAAVSLLGLAFGAILGYAS) are hydrophobic. One can recognise a 4Fe-4S domain in the interval 32–91 (EDDPVVEKIDEILPQSQCGQCGYPGCRPYAEAISCNGEKINRCAPGGEAVMLKIAELLNV). The [4Fe-4S] cluster site is built by Cys-49, Cys-52, Cys-57, Cys-74, Cys-117, Cys-120, Cys-123, Cys-127, Cys-147, Cys-150, Cys-153, and Cys-157. 2 consecutive 4Fe-4S ferredoxin-type domains span residues 108–137 (MVAF…GATR) and 138–167 (AMHT…LQPV).

It belongs to the 4Fe4S bacterial-type ferredoxin family. RnfB subfamily. The complex is composed of six subunits: RsxA, RsxB, RsxC, RsxD, RsxE and RsxG. It depends on [4Fe-4S] cluster as a cofactor.

It is found in the cell inner membrane. In terms of biological role, part of a membrane-bound complex that couples electron transfer with translocation of ions across the membrane. Required to maintain the reduced state of SoxR. In Escherichia coli O17:K52:H18 (strain UMN026 / ExPEC), this protein is Ion-translocating oxidoreductase complex subunit B.